Reading from the N-terminus, the 305-residue chain is Oxygen-dependent coproporphyrinogen-III oxidase (305 aa).

Residue Ser-98 participates in substrate binding. A divalent metal cation-binding residues include His-102 and His-112. The Proton donor role is filled by His-112. Residue 114–116 coordinates substrate; the sequence is NVR. Residues His-151 and His-181 each contribute to the a divalent metal cation site. An important for dimerization region spans residues 246 to 281; sequence YVEFNLVYDRGTLFGLQSGGRTESILMSMPPLARWE. Residue 264-266 participates in substrate binding; sequence GGR.

It belongs to the aerobic coproporphyrinogen-III oxidase family. In terms of assembly, homodimer. The cofactor is a divalent metal cation.

The protein localises to the cytoplasm. The enzyme catalyses coproporphyrinogen III + O2 + 2 H(+) = protoporphyrinogen IX + 2 CO2 + 2 H2O. It participates in porphyrin-containing compound metabolism; protoporphyrin-IX biosynthesis; protoporphyrinogen-IX from coproporphyrinogen-III (O2 route): step 1/1. In terms of biological role, involved in the heme biosynthesis. Catalyzes the aerobic oxidative decarboxylation of propionate groups of rings A and B of coproporphyrinogen-III to yield the vinyl groups in protoporphyrinogen-IX. The polypeptide is Oxygen-dependent coproporphyrinogen-III oxidase (Vibrio parahaemolyticus serotype O3:K6 (strain RIMD 2210633)).